Here is a 48-residue protein sequence, read N- to C-terminus: Protein TUNAR (48 aa).

The tract at residues 1-20 (MVITSGNDEDRGGQEKESKE) is disordered. Residues 8 to 20 (DEDRGGQEKESKE) show a composition bias toward basic and acidic residues. The chain crosses the membrane as a helical span at residues 24-44 (LAMLGIIGTILNLIVIIFVYI).

In terms of assembly, interacts with ATPase ATP2A2/SERCA2. Interacts with ATPase ATP2A3/SERCA3; the interaction occurs at low levels in low glucose conditions and is increased by high glucose levels. In the adult, expressed in Purkinje cells in the cerebellum, in motor neurons and interneurons in the spinal cord and in neurons of the cortex, hippocampus and thalamus (at protein level). Also detected in the developing cortex, hippocampus and thalamus at embryonic day E15.5 (at protein level).

The protein resides in the endoplasmic reticulum membrane. Its subcellular location is the extracellular vesicle membrane. Its function is as follows. In neurons, plays a role in the regulation of intracellular Ca(2+), possibly by acting as an activator of ATP2A2/SERCA2, thus increasing the efficiency with which Ca(2+) is removed from the cytoplasm. Inhibits differentiation of embryonic stem cells into neurons and inhibits neurite outgrowth, likely as a result of its role in intracellular Ca(2+) regulation. In pancreatic beta cells, lowers Ca(2+) levels in the endoplasmic reticulum and enhances glucose-stimulated insulin secretion. The chain is Protein TUNAR from Mus musculus (Mouse).